The following is a 257-amino-acid chain: Zinc transporter ZupT (257 aa).

The next 3 membrane-spanning stretches (helical) occupy residues 5 to 25, 32 to 52, and 61 to 81; these read LILTILAGAATFIGAFLGVLG, LLAFSLGFAAGIMLLISLMEM, and GMSPVLGYGMFIFGLLGYFGL. 2 residues coordinate Fe(2+): Asn120 and Glu123. Zn(2+) is bound by residues Glu123 and His148. Helical transmembrane passes span 137 to 157, 171 to 191, 195 to 215, and 236 to 256; these read LGFGIALAVALHNIPEGLAVA, ILWAGISGLAEILGGVLAWLI, MISPVVMAAIMAAVAGIMVAL, and GVLCGMSVMGFSLVLLQTVGI. Asn149, Glu152, and Glu181 together coordinate Fe(2+). Residue Glu152 coordinates Zn(2+).

It belongs to the ZIP transporter (TC 2.A.5) family. ZupT subfamily.

Its subcellular location is the cell inner membrane. It catalyses the reaction Zn(2+)(in) = Zn(2+)(out). Mediates zinc uptake. May also transport other divalent cations. This chain is Zinc transporter ZupT, found in Escherichia coli O81 (strain ED1a).